Consider the following 174-residue polypeptide: Dual-action ribosomal maturation protein DarP (174 aa).

Belongs to the DarP family.

The protein resides in the cytoplasm. Member of a network of 50S ribosomal subunit biogenesis factors which assembles along the 30S-50S interface, preventing incorrect 23S rRNA structures from forming. Promotes peptidyl transferase center (PTC) maturation. This chain is Dual-action ribosomal maturation protein DarP, found in Pseudomonas paraeruginosa (strain DSM 24068 / PA7) (Pseudomonas aeruginosa (strain PA7)).